The sequence spans 549 residues: Glucose-6-phosphate isomerase (549 aa).

Glu-352 functions as the Proton donor in the catalytic mechanism. Active-site residues include His-383 and Lys-511.

This sequence belongs to the GPI family.

It localises to the cytoplasm. The catalysed reaction is alpha-D-glucose 6-phosphate = beta-D-fructose 6-phosphate. The protein operates within carbohydrate biosynthesis; gluconeogenesis. It participates in carbohydrate degradation; glycolysis; D-glyceraldehyde 3-phosphate and glycerone phosphate from D-glucose: step 2/4. Functionally, catalyzes the reversible isomerization of glucose-6-phosphate to fructose-6-phosphate. In Methylocella silvestris (strain DSM 15510 / CIP 108128 / LMG 27833 / NCIMB 13906 / BL2), this protein is Glucose-6-phosphate isomerase.